We begin with the raw amino-acid sequence, 483 residues long: Xylulose kinase (483 aa).

Met79–His80 is a substrate binding site.

The protein belongs to the FGGY kinase family.

The catalysed reaction is D-xylulose + ATP = D-xylulose 5-phosphate + ADP + H(+). Its function is as follows. Catalyzes the phosphorylation of D-xylulose to D-xylulose 5-phosphate. This is Xylulose kinase from Staphylococcus xylosus.